The chain runs to 203 residues: Small ribosomal subunit protein uS5 (203 aa).

Positions methionine 1 to glycine 25 are enriched in basic and acidic residues. Positions methionine 1–glutamine 36 are disordered. Positions glutamine 36–valine 99 constitute an S5 DRBM domain.

Belongs to the universal ribosomal protein uS5 family. As to quaternary structure, part of the 30S ribosomal subunit. Contacts proteins S4 and S8.

In terms of biological role, with S4 and S12 plays an important role in translational accuracy. Functionally, located at the back of the 30S subunit body where it stabilizes the conformation of the head with respect to the body. The sequence is that of Small ribosomal subunit protein uS5 from Saccharopolyspora erythraea (strain ATCC 11635 / DSM 40517 / JCM 4748 / NBRC 13426 / NCIMB 8594 / NRRL 2338).